A 560-amino-acid polypeptide reads, in one-letter code: Protein DA1-related 7 (560 aa).

UIM domains follow at residues 43-62 (SEADQIEWAIQDSFNPQETS), 92-111 (EEDQQLSKIVEESLKEKGKS), and 155-174 (NEDAQLQKVIWESAKGKGQI). The region spanning 199-269 (SICDGCKSAI…HVCKKKFPGR (71 aa)) is the LIM zinc-binding domain.

In terms of assembly, interacts with ubiquitin.

Its function is as follows. Ubiquitin receptor that probably regulates developmental process. The chain is Protein DA1-related 7 (DAR7) from Arabidopsis thaliana (Mouse-ear cress).